A 354-amino-acid chain; its full sequence is Lariat debranching enzyme (354 aa).

Residues Cys14, His16, and Asp45 each coordinate a divalent metal cation. RNA contacts are provided by Lys59, Asn90, His91, Lys134, and His156. Asn90 is a binding site for a divalent metal cation. The interval 130-158 (SGIYKSFDEKKPYTYPPSPNDVVSLFHTR) is lariat recognition loop. Residue His180 coordinates a divalent metal cation. Positions 201, 205, 230, 231, and 232 each coordinate RNA. Position 230 (His230) interacts with a divalent metal cation. Residue His232 participates in a divalent metal cation binding.

Belongs to the lariat debranching enzyme family. Fe(2+) serves as cofactor. Requires Zn(2+) as cofactor. Mn(2+) is required as a cofactor.

Its subcellular location is the cytoplasm. The protein localises to the perinuclear region. With respect to regulation, active in presence of diverse metals including Fe(2+), Zn(2+) and Mn(2+). Binds two metal cations in two adjacent alpha and beta metal-binding pockets. The activity is the highest with Fe(2+) bound to the 2 metal-binding sites. The activity is slightly lower with Fe(2+) bound to the beta site and Zn(2+) to the alpha site and decreases further when only Zn(2+) is bound. No activity with Mn(2+). However, another study showed activity with Mn(2+) bound to the beta site and Zn(2+) to the alpha site. Mn(2+) appears unable to bind to the alpha site. In terms of biological role, cleaves the 2'-5' phosphodiester linkage at the branch point of excised lariat intron RNA and converts them into linear molecules that can be subsequently degraded, thereby facilitating ribonucleotide turnover. The chain is Lariat debranching enzyme from Entamoeba histolytica (strain ATCC 30459 / HM-1:IMSS / ABRM).